A 485-amino-acid chain; its full sequence is Glutamyl-tRNA(Gln) amidotransferase subunit A (485 aa).

Catalysis depends on charge relay system residues lysine 79 and serine 154. Serine 178 (acyl-ester intermediate) is an active-site residue.

Belongs to the amidase family. GatA subfamily. In terms of assembly, heterotrimer of A, B and C subunits.

The catalysed reaction is L-glutamyl-tRNA(Gln) + L-glutamine + ATP + H2O = L-glutaminyl-tRNA(Gln) + L-glutamate + ADP + phosphate + H(+). Its function is as follows. Allows the formation of correctly charged Gln-tRNA(Gln) through the transamidation of misacylated Glu-tRNA(Gln) in organisms which lack glutaminyl-tRNA synthetase. The reaction takes place in the presence of glutamine and ATP through an activated gamma-phospho-Glu-tRNA(Gln). This Clostridium novyi (strain NT) protein is Glutamyl-tRNA(Gln) amidotransferase subunit A.